The primary structure comprises 833 residues: Leucine--tRNA ligase (833 aa).

Positions 41–52 (PYPSGAGLHVGH) match the 'HIGH' region motif. The 'KMSKS' region motif lies at 610-614 (KMSKS). K613 lines the ATP pocket.

The protein belongs to the class-I aminoacyl-tRNA synthetase family.

It is found in the cytoplasm. It catalyses the reaction tRNA(Leu) + L-leucine + ATP = L-leucyl-tRNA(Leu) + AMP + diphosphate. The sequence is that of Leucine--tRNA ligase from Streptococcus pyogenes serotype M5 (strain Manfredo).